The following is an 837-amino-acid chain: Protein translocase subunit SecA (837 aa).

ATP contacts are provided by residues glutamine 85, 103 to 107, and aspartate 493; that span reads GEGKT. 4 residues coordinate Zn(2+): cysteine 821, cysteine 823, cysteine 832, and histidine 833.

It belongs to the SecA family. As to quaternary structure, monomer and homodimer. Part of the essential Sec protein translocation apparatus which comprises SecA, SecYEG and auxiliary proteins SecDF. Other proteins may also be involved. It depends on Zn(2+) as a cofactor.

The protein resides in the cell membrane. It localises to the cytoplasm. The catalysed reaction is ATP + H2O + cellular proteinSide 1 = ADP + phosphate + cellular proteinSide 2.. In terms of biological role, part of the Sec protein translocase complex. Interacts with the SecYEG preprotein conducting channel. Has a central role in coupling the hydrolysis of ATP to the transfer of proteins into and across the cell membrane, serving as an ATP-driven molecular motor driving the stepwise translocation of polypeptide chains across the membrane. The polypeptide is Protein translocase subunit SecA (Streptococcus pneumoniae serotype 19F (strain G54)).